The chain runs to 794 residues: Phenylalanine--tRNA ligase beta subunit (794 aa).

Residues 40–158 (NSLNSELVLG…LKKYLGKDVK (119 aa)) enclose the tRNA-binding domain. The B5 domain occupies 402 to 477 (KNKTEFEIKI…RLYSYDNIQE (76 aa)). The Mg(2+) site is built by Asp455, Asp461, Glu464, and Glu465. Residues 702 to 794 (SKFQSSSRDL…NVKKMKVVIR (93 aa)) enclose the FDX-ACB domain.

Belongs to the phenylalanyl-tRNA synthetase beta subunit family. Type 1 subfamily. As to quaternary structure, tetramer of two alpha and two beta subunits. It depends on Mg(2+) as a cofactor.

The protein resides in the cytoplasm. The catalysed reaction is tRNA(Phe) + L-phenylalanine + ATP = L-phenylalanyl-tRNA(Phe) + AMP + diphosphate + H(+). The chain is Phenylalanine--tRNA ligase beta subunit from Mycoplasma capricolum subsp. capricolum (strain California kid / ATCC 27343 / NCTC 10154).